The primary structure comprises 582 residues: Choline kinase (582 aa).

A disordered region spans residues 1-36 (MVQESRPGSVRSYSVGYQARSRSSSQRRHSLTRQRS). At Ser30 the chain carries Phosphoserine; by PKA. Phosphoserine occurs at positions 48 and 51. At Thr54 the chain carries Phosphothreonine. At Ser85 the chain carries Phosphoserine; by PKA.

This sequence belongs to the choline/ethanolamine kinase family. In terms of assembly, monomer. Interacts with NAP1. Requires Mg(2+) as cofactor.

It localises to the cytoplasm. It catalyses the reaction choline + ATP = phosphocholine + ADP + H(+). The enzyme catalyses ethanolamine + ATP = phosphoethanolamine + ADP + H(+). It functions in the pathway phospholipid metabolism; phosphatidylcholine biosynthesis; phosphocholine from choline: step 1/1. Functionally, catalyzes the committed step in the synthesis of phosphatidylcholine by the CDP-choline pathway. Also exhibits ethanolamine kinase activity but it is a poor substrate at 14% efficiency compared with choline. The chain is Choline kinase from Saccharomyces cerevisiae (strain ATCC 204508 / S288c) (Baker's yeast).